The sequence spans 702 residues: Polyribonucleotide nucleotidyltransferase (702 aa).

Positions 485 and 491 each coordinate Mg(2+). Positions 552 to 612 (PRTEIICIDP…EGVKKAISII (61 aa)) constitute a KH domain. The 69-residue stretch at 622–690 (GEIYLGKVTK…NQGRINLSRK (69 aa)) folds into the S1 motif domain.

This sequence belongs to the polyribonucleotide nucleotidyltransferase family. The cofactor is Mg(2+).

Its subcellular location is the cytoplasm. It carries out the reaction RNA(n+1) + phosphate = RNA(n) + a ribonucleoside 5'-diphosphate. Functionally, involved in mRNA degradation. Catalyzes the phosphorolysis of single-stranded polyribonucleotides processively in the 3'- to 5'-direction. This chain is Polyribonucleotide nucleotidyltransferase, found in Clostridium botulinum (strain Loch Maree / Type A3).